A 743-amino-acid chain; its full sequence is Catalase-peroxidase (743 aa).

Polar residues predominate over residues 1–15; the sequence is MSSDSRPPQPDTSTQ. A disordered region spans residues 1 to 40; sequence MSSDSRPPQPDTSTQSNSESESPAISSPTPQDHAPMTNRD. Positions 16 to 28 are enriched in low complexity; it reads SNSESESPAISSP. A cross-link (tryptophyl-tyrosyl-methioninium (Trp-Tyr) (with M-259)) is located at residues 110–233; it reads WHAAGTYRIQ…YGATTMGLIY (124 aa). The Proton acceptor role is filled by His-111. The tryptophyl-tyrosyl-methioninium (Tyr-Met) (with W-110) cross-link spans 233-259; that stretch reads YVNPEGPEGKPDPVAAAHDIRETFARM. His-274 serves as a coordination point for heme b. The tract at residues 490-511 is disordered; sequence DKRGGANGGRLRLEPQKSWESN.

It belongs to the peroxidase family. Peroxidase/catalase subfamily. In terms of assembly, homodimer or homotetramer. The cofactor is heme b. In terms of processing, formation of the three residue Trp-Tyr-Met cross-link is important for the catalase, but not the peroxidase activity of the enzyme.

It carries out the reaction H2O2 + AH2 = A + 2 H2O. The catalysed reaction is 2 H2O2 = O2 + 2 H2O. Its function is as follows. Bifunctional enzyme with both catalase and broad-spectrum peroxidase activity. The polypeptide is Catalase-peroxidase (Mycobacterium marinum (strain ATCC BAA-535 / M)).